Here is a 420-residue protein sequence, read N- to C-terminus: Dynein axonemal assembly factor 4 (420 aa).

A CS domain is found at 3 to 87 (LQVSDYSWQQ…KEAAMWETLS (85 aa)). The tract at residues 7–103 (DYSWQQTKTA…ETMQRIREKS (97 aa)) is mediates interaction with ESR1 and STUB1. TPR repeat units follow at residues 290 to 323 (PEWL…NNKM), 324 to 357 (PLLY…LMPP), and 366 to 399 (MKAH…DPSN).

Interacts with ZMYND10. Interacts with STUB1. Interacts with ESR1 and ESR2. Interacts with DNAAF2. Interacts with CCT3, CCT4, CCT5 and CCT8. Interacts with DNAAF6/PIH1D3.

It is found in the nucleus. The protein localises to the cytoplasm. Its subcellular location is the cell projection. It localises to the neuron projection. The protein resides in the dynein axonemal particle. Its function is as follows. Involved in neuronal migration during development of the cerebral neocortex. May regulate the stability and proteasomal degradation of the estrogen receptors that play an important role in neuronal differentiation, survival and plasticity. Axonemal dynein assembly factor required for ciliary motility. In Pongo pygmaeus (Bornean orangutan), this protein is Dynein axonemal assembly factor 4.